Reading from the N-terminus, the 163-residue chain is K88 minor fimbrial subunit FaeF (163 aa).

A signal peptide spans 1–22 (MKKTMMAAALVLSALSIQSALA).

It localises to the fimbrium. Its function is as follows. K88 minor fimbrial subunit, plays an essential role in the biogenesis of the K88 fimbriae. required at some step in the initiation and/or elongation of the K88 fimbriae. This Escherichia coli protein is K88 minor fimbrial subunit FaeF (faeF).